The primary structure comprises 172 residues: Adenine phosphoribosyltransferase (172 aa).

It belongs to the purine/pyrimidine phosphoribosyltransferase family. In terms of assembly, homodimer.

The protein resides in the cytoplasm. It carries out the reaction AMP + diphosphate = 5-phospho-alpha-D-ribose 1-diphosphate + adenine. It functions in the pathway purine metabolism; AMP biosynthesis via salvage pathway; AMP from adenine: step 1/1. Catalyzes a salvage reaction resulting in the formation of AMP, that is energically less costly than de novo synthesis. This is Adenine phosphoribosyltransferase from Crocosphaera subtropica (strain ATCC 51142 / BH68) (Cyanothece sp. (strain ATCC 51142)).